A 506-amino-acid polypeptide reads, in one-letter code: Sodium-coupled neutral amino acid symporter 2 (506 aa).

The interval 1–23 (MKKAEMGRFSISPDEDSSSYSSN) is disordered. The Cytoplasmic segment spans residues 1 to 76 (MKKAEMGRFS…HPGTTSFGMS (76 aa)). The interval 1–96 (MKKAEMGRFS…SGILGLSYAM (96 aa)) is regulates protein turnover upon amino acid deprivation. S10, S12, S21, S22, and S55 each carry phosphoserine. A helical membrane pass occupies residues 77 to 96 (VFNLSNAIVGSGILGLSYAM). Residue N82 participates in Na(+) binding. Over 97-102 (ANTGIA) the chain is Extracellular. The chain crosses the membrane as a helical span at residues 103–123 (LFIILLTFVSIFSLYSVHLLL). The Cytoplasmic portion of the chain corresponds to 124 to 158 (KTANEGGSLLYEQLGYKAFGLVGKLAASGSITMQN). The helical transmembrane segment at 159–177 (IGAMSSYLFIVKYELPLVI) threads the bilayer. Over 178–188 (QALTNIEDKTG) the chain is Extracellular. The helical transmembrane segment at 189 to 209 (LWYLNGNYLVLLVSLVVILPL) threads the bilayer. Topologically, residues 210–217 (SLFRNLGY) are cytoplasmic. Residues 218–238 (LGYTSGLSLLCMVFFLIVVIC) traverse the membrane as a helical segment. Residues 239 to 292 (KKFQVPCPVEAALIINETINTTLTQPTALVPALSHNVTENDSCRPHYFIFNSQT) lie on the Extracellular side of the membrane. C245 and C281 form a disulfide bridge. N258 and N274 each carry an N-linked (GlcNAc...) asparagine glycan. The chain crosses the membrane as a helical span at residues 293-313 (VYAVPILIFSFVCHPAVLPIY). The Cytoplasmic portion of the chain corresponds to 314-329 (EELKDRSRRRMMNVSK). A helical transmembrane segment spans residues 330-350 (ISFFAMFLMYLLAALFGYLTF). Residues 351-371 (YEHVESELLHTYSSILGTDIL) are Extracellular-facing. Residues 372–392 (LLIVRLAVLMAVTLTVPVVIF) traverse the membrane as a helical segment. T386 contributes to the Na(+) binding site. At 393 to 413 (PIRSSVTHLLCASKDFSWWRH) the chain is on the cytoplasmic side. The helical transmembrane segment at 414-434 (SLITVSILAFTNLLVIFVPTI) threads the bilayer. The Extracellular segment spans residues 435–436 (RD). Residues 437-457 (IFGFIGASAASMLIFILPSAF) form a helical membrane-spanning segment. The Cytoplasmic portion of the chain corresponds to 458-472 (YIKLVKKEPMKSVQK). A helical transmembrane segment spans residues 473 to 495 (IGALFFLLSGVLVMTGSMALIVL). Topologically, residues 496 to 506 (DWVHNAPGGGH) are extracellular.

It belongs to the amino acid/polyamine transporter 2 family. Polyubiquitination by NEDD4L regulates the degradation and the activity of SLC38A2. In terms of tissue distribution, ubiquitously expressed. Expressed in neocortex. Widely expressed in the central nervous system with higher concentrations in caudal regions. Expressed by glutamatergic and GABAergic neurons together with astrocytes and other non-neuronal cells in the cerebral cortex (at protein level).

It localises to the cell membrane. It carries out the reaction L-alanine(in) + Na(+)(in) = L-alanine(out) + Na(+)(out). The catalysed reaction is glycine(in) + Na(+)(in) = glycine(out) + Na(+)(out). It catalyses the reaction L-serine(in) + Na(+)(in) = L-serine(out) + Na(+)(out). The enzyme catalyses L-proline(in) + Na(+)(in) = L-proline(out) + Na(+)(out). It carries out the reaction L-methionine(in) + Na(+)(in) = L-methionine(out) + Na(+)(out). The catalysed reaction is L-histidine(in) + Na(+)(in) = L-histidine(out) + Na(+)(out). It catalyses the reaction L-asparagine(in) + Na(+)(in) = L-asparagine(out) + Na(+)(out). The enzyme catalyses L-glutamine(in) + Na(+)(in) = L-glutamine(out) + Na(+)(out). It carries out the reaction L-threonine(in) + Na(+)(in) = L-threonine(out) + Na(+)(out). The catalysed reaction is L-leucine(in) + Na(+)(in) = L-leucine(out) + Na(+)(out). It catalyses the reaction L-phenylalanine(in) + Na(+)(in) = L-phenylalanine(out) + Na(+)(out). Inhibited by N-methyl-D-glucamine. Inhibited by choline. Allosteric regulation of sodium ions binding by pH. Its function is as follows. Symporter that cotransports neutral amino acids and sodium ions from the extracellular to the intracellular side of the cell membrane. The transport is pH-sensitive, Li(+)-intolerant, electrogenic, driven by the Na(+) electrochemical gradient and cotransports of neutral amino acids and sodium ions with a stoichiometry of 1:1. May function in the transport of amino acids at the blood-brain barrier. May function in the transport of amino acids in the supply of maternal nutrients to the fetus through the placenta. Maintains a key metabolic glutamine/glutamate balance underpinning retrograde signaling by dendritic release of the neurotransmitter glutamate. Transports L-proline in differentiating osteoblasts for the efficient synthesis of proline-enriched proteins and provides proline essential for osteoblast differentiation and bone formation during bone development. The sequence is that of Sodium-coupled neutral amino acid symporter 2 from Homo sapiens (Human).